The chain runs to 428 residues: Inward rectifier potassium channel 2 (428 aa).

The Cytoplasmic portion of the chain corresponds to Met-1–Trp-81. The residue at position 76 (Cys-76) is an S-nitrosocysteine. Residues Arg-82–Ile-106 form a helical membrane-spanning segment. The Extracellular segment spans residues Ala-107 to Ser-128. The helical; Pore-forming intramembrane region spans Phe-129–Gln-140. The segment at residues Thr-141–Phe-147 is an intramembrane region (pore-forming). Residues Thr-142 to Phe-147 carry the Selectivity filter motif. The Extracellular portion of the chain corresponds to Arg-148 to Ile-156. The helical transmembrane segment at Ala-157–Ala-178 threads the bilayer. Topologically, residues Val-179–Ile-428 are cytoplasmic. Positions Ala-181 to Leu-208 are polyphosphoinositide (PIP2)-binding. Residues Thr-383–Ile-428 form a disordered region. Residues Ser-426–Ile-428 carry the PDZ-binding motif.

Belongs to the inward rectifier-type potassium channel (TC 1.A.2.1) family. KCNJ2 subfamily. In terms of assembly, homotetramer. Homomultimeric and heteromultimeric association with KCNJ4/Kir2.3. Can form heteromeric channels with Kir2.6/KCNJ18. Associates, via its PDZ-recognition domain, with a complex containing LIN7A, LIN7B, LIN7C, DLG1, CASK and APBA1. Post-translationally, S-nitrosylation increases the open probability and inward rectifying currents. In terms of tissue distribution, prominently expressed in the central nervous system. Also found in other excitable tissues such as heart and skeletal muscle.

The protein resides in the cell membrane. Its subcellular location is the sarcolemma. It is found in the T-tubule. The enzyme catalyses K(+)(in) = K(+)(out). With respect to regulation, activated by phosphatidylinositol 4,5 biphosphate (PtdIns(4,5)P2). Its function is as follows. Inward rectifier potassium channels are characterized by a greater tendency to allow potassium to flow into the cell rather than out of it. Their voltage dependence is regulated by the concentration of extracellular potassium; as external potassium is raised, the voltage range of the channel opening shifts to more positive voltages. The inward rectification is mainly due to the blockage of outward current by internal magnesium. Can be blocked by extracellular barium and cesium. Probably participates in establishing action potential waveform and excitability of neuronal and muscle tissues. The chain is Inward rectifier potassium channel 2 (Kcnj2) from Mus musculus (Mouse).